We begin with the raw amino-acid sequence, 193 residues long: Protein GrpE (193 aa).

A disordered region spans residues 1–26; it reads MTKKHHKEQEEIQETIKTEAAEENVG. Residues 7-20 show a composition bias toward basic and acidic residues; the sequence is KEQEEIQETIKTEA.

It belongs to the GrpE family. Homodimer.

Its subcellular location is the cytoplasm. Participates actively in the response to hyperosmotic and heat shock by preventing the aggregation of stress-denatured proteins, in association with DnaK and GrpE. It is the nucleotide exchange factor for DnaK and may function as a thermosensor. Unfolded proteins bind initially to DnaJ; upon interaction with the DnaJ-bound protein, DnaK hydrolyzes its bound ATP, resulting in the formation of a stable complex. GrpE releases ADP from DnaK; ATP binding to DnaK triggers the release of the substrate protein, thus completing the reaction cycle. Several rounds of ATP-dependent interactions between DnaJ, DnaK and GrpE are required for fully efficient folding. This chain is Protein GrpE, found in Chlorobaculum parvum (strain DSM 263 / NCIMB 8327) (Chlorobium vibrioforme subsp. thiosulfatophilum).